A 644-amino-acid chain; its full sequence is Threonine--tRNA ligase (644 aa).

Residues 1 to 61 form the TGS domain; it reads MVAITLPDGS…VADAKVEIVT (61 aa). Residues 242 to 533 form a catalytic region; that stretch reads DHRKIGKALN…LIENYAGWMP (292 aa). 3 residues coordinate Zn(2+): C333, H384, and H510.

The protein belongs to the class-II aminoacyl-tRNA synthetase family. In terms of assembly, homodimer. The cofactor is Zn(2+).

The protein localises to the cytoplasm. It carries out the reaction tRNA(Thr) + L-threonine + ATP = L-threonyl-tRNA(Thr) + AMP + diphosphate + H(+). Catalyzes the attachment of threonine to tRNA(Thr) in a two-step reaction: L-threonine is first activated by ATP to form Thr-AMP and then transferred to the acceptor end of tRNA(Thr). Also edits incorrectly charged L-seryl-tRNA(Thr). This chain is Threonine--tRNA ligase, found in Psychrobacter arcticus (strain DSM 17307 / VKM B-2377 / 273-4).